We begin with the raw amino-acid sequence, 354 residues long: Peptide chain release factor 1 (354 aa).

Glutamine 230 is subject to N5-methylglutamine.

Belongs to the prokaryotic/mitochondrial release factor family. Methylated by PrmC. Methylation increases the termination efficiency of RF1.

The protein localises to the cytoplasm. Functionally, peptide chain release factor 1 directs the termination of translation in response to the peptide chain termination codons UAG and UAA. The polypeptide is Peptide chain release factor 1 (Leptospira interrogans serogroup Icterohaemorrhagiae serovar copenhageni (strain Fiocruz L1-130)).